Here is a 147-residue protein sequence, read N- to C-terminus: Austinoid biosynthesis clusters protein H (147 aa).

It belongs to the trt14 isomerase family. Homodimer.

It functions in the pathway secondary metabolite biosynthesis; terpenoid biosynthesis. Part of the gene cluster B that mediates the biosynthesis of the fungal meroterpenoid acetoxydehydroaustin. The first step of the pathway is the synthesis of 3,5-dimethylorsellinic acid by the polyketide synthase ausA. 3,5-dimethylorsellinic acid is then prenylated by the polyprenyl transferase ausN. Further epoxidation by the FAD-dependent monooxygenase ausM and cyclization by the probable terpene cyclase ausL lead to the formation of protoaustinoid A. Protoaustinoid A is then oxidized to spiro-lactone preaustinoid A3 by the combined action of the FAD-binding monooxygenases ausB and ausC, and the dioxygenase ausE. Acid-catalyzed keto-rearrangement and ring contraction of the tetraketide portion of preaustinoid A3 by ausJ lead to the formation of preaustinoid A4. The aldo-keto reductase ausK, with the help of ausH, is involved in the next step by transforming preaustinoid A4 into isoaustinone which is in turn hydroxylated by the P450 monooxygenase ausI to form austinolide. The cytochrome P450 monooxygenase ausG then modifies austinolide to austinol. Austinol is further acetylated to austin by the O-acetyltransferase ausP, which spontaneously changes to dehydroaustin. The cytochrome P450 monooxygenase then converts dehydroaustin is into 7-dehydrodehydroaustin. The hydroxylation catalyzed by ausR permits the second O-acetyltransferase ausQ to add an additional acetyl group to the molecule, leading to the formation of acetoxydehydroaustin. Due to genetic rearrangements of the clusters and the subsequent loss of some enzymes, the end product of the Penicillium brasilianum austinoid biosynthesis clusters is acetoxydehydroaustin. The sequence is that of Austinoid biosynthesis clusters protein H from Penicillium brasilianum.